The following is a 409-amino-acid chain: 1-deoxy-D-xylulose 5-phosphate reductoisomerase (409 aa).

Positions 5, 6, 7, 8, 31, 33, and 122 each coordinate NADPH. Lysine 123 serves as a coordination point for 1-deoxy-D-xylulose 5-phosphate. Glutamate 124 serves as a coordination point for NADPH. Mn(2+) is bound at residue aspartate 148. 1-deoxy-D-xylulose 5-phosphate-binding residues include serine 149, glutamate 150, serine 186, and histidine 209. Glutamate 150 is a Mn(2+) binding site. Residue glycine 215 coordinates NADPH. 1-deoxy-D-xylulose 5-phosphate contacts are provided by serine 222, asparagine 227, lysine 228, and glutamate 231. Glutamate 231 contacts Mn(2+).

It belongs to the DXR family. The cofactor is Mg(2+). Requires Mn(2+) as cofactor.

It catalyses the reaction 2-C-methyl-D-erythritol 4-phosphate + NADP(+) = 1-deoxy-D-xylulose 5-phosphate + NADPH + H(+). The protein operates within isoprenoid biosynthesis; isopentenyl diphosphate biosynthesis via DXP pathway; isopentenyl diphosphate from 1-deoxy-D-xylulose 5-phosphate: step 1/6. Functionally, catalyzes the NADPH-dependent rearrangement and reduction of 1-deoxy-D-xylulose-5-phosphate (DXP) to 2-C-methyl-D-erythritol 4-phosphate (MEP). This is 1-deoxy-D-xylulose 5-phosphate reductoisomerase from Parasynechococcus marenigrum (strain WH8102).